The chain runs to 710 residues: Interleukin-1 receptor-associated kinase 1 (710 aa).

The Death domain occupies 27 to 106 (MCRFYKVMDA…DIITAWHPPA (80 aa)). Position 66 is a phosphothreonine; by PKC/PRKCI (threonine 66). The disordered stretch occupies residues 107–133 (PVVPPSTAAPRPSSISAGSEAGDWSPR). Residues 110–211 (PPSTAAPRPS…FCEISQGTCN (102 aa)) form a proST region region. Residues 111-123 (PSTAAPRPSSISA) show a composition bias toward low complexity. Residue serine 131 is modified to Phosphoserine. Glycyl lysine isopeptide (Lys-Gly) (interchain with G-Cter in ubiquitin) cross-links involve residues lysine 134 and lysine 180. The segment at 169 to 190 (PPLPSSAPSSTKSSPESPVSGL) is disordered. Residues 174 to 188 (SAPSSTKSSPESPVS) are compositionally biased toward low complexity. A Phosphothreonine; by IRAK4 modification is found at threonine 209. In terms of domain architecture, Protein kinase spans 212–521 (FSEELRIGEG…TQVYKRLEGL (310 aa)). Residues 218 to 226 (IGEGGFGCV) and lysine 239 contribute to the ATP site. Aspartate 340 (proton acceptor) is an active-site residue. ATP contacts are provided by residues 342–345 (KSSN) and aspartate 358. Serine 375 is modified (phosphoserine). Residue threonine 387 is modified to Phosphothreonine. Disordered regions lie at residues 527 to 655 (WELE…SEPP) and 689 to 710 (FPGL…EFQS). Over residues 537–553 (PSPQENSYMSTTGSAQS) the composition is skewed to polar residues. Residue serine 553 is modified to Phosphoserine. Residues 567 to 576 (APAQAAQQLQ) show a composition bias toward low complexity. Polar residues predominate over residues 616–639 (SCTQGGTTRESSVRSSPGFQPTTM). Residues 640 to 654 (EGSPTGSSSLLSSEP) are compositionally biased toward low complexity.

It belongs to the protein kinase superfamily. TKL Ser/Thr protein kinase family. Pelle subfamily. As to quaternary structure, homodimer. Forms a complex with TRAF6, PELI1, IRAK4 and MYD88. Direct binding of SMAD6 to PELI1 prevents complex formation and hence negatively regulates IL1R-TLR signaling and eventually NF-kappa-B-mediated gene expression. The TRAF6-PELI1-IRAK4-MYD88 complex recruits MAP3K7/TAK1, TAB1 and TAB2 to mediate NF-kappa-B activation. Interaction with MYD88 recruits IRAK1 to the stimulated receptor complex. Interacts with TOLLIP; this interaction occurs in the cytosol prior to receptor activation. Interacts with IL1RL1. Interacts (when polyubiquitinated) with IKBKG/NEMO. Interacts with RSAD2/viperin. Interacts with IRAK1BP1. Interacts with PELI2. Interacts with ZC3H12A; this interaction increases the interaction between ZC3H12A and IKBKB/IKKB. Interacts with IRAK4. Interacts with PELI3. Interacts with PELI1 and TRAF6. Interacts with INAVA; the interaction takes place upon PRR stimulation. Interacts (via C-terminus) with NFATC4 (via N-terminus). Mg(2+) serves as cofactor. Following recruitment on the activated receptor complex, phosphorylated on Thr-209, probably by IRAK4, resulting in a conformational change of the kinase domain, allowing further phosphorylations to take place. Thr-387 phosphorylation in the activation loop is required to achieve full enzymatic activity. In terms of processing, polyubiquitinated by TRAF6 after cell stimulation with IL-1-beta by PELI1, PELI2 and PELI3. Polyubiquitination occurs with polyubiquitin chains linked through 'Lys-63'. Ubiquitination promotes interaction with NEMO/IKBKG. Also sumoylated; leading to nuclear translocation. In terms of tissue distribution, highly expressed in liver, followed by kidney and skeletal muscle.

It is found in the cytoplasm. Its subcellular location is the nucleus. The protein localises to the lipid droplet. It carries out the reaction L-seryl-[protein] + ATP = O-phospho-L-seryl-[protein] + ADP + H(+). The catalysed reaction is L-threonyl-[protein] + ATP = O-phospho-L-threonyl-[protein] + ADP + H(+). Its function is as follows. Serine/threonine-protein kinase that plays a critical role in initiating innate immune response against foreign pathogens. Involved in Toll-like receptor (TLR) and IL-1R signaling pathways. Is rapidly recruited by MYD88 to the receptor-signaling complex upon TLR activation. Association with MYD88 leads to IRAK1 phosphorylation by IRAK4 and subsequent autophosphorylation and kinase activation. Phosphorylates E3 ubiquitin ligases Pellino proteins (PELI1, PELI2 and PELI3) to promote pellino-mediated polyubiquitination of IRAK1. Then, the ubiquitin-binding domain of IKBKG/NEMO binds to polyubiquitinated IRAK1 bringing together the IRAK1-MAP3K7/TAK1-TRAF6 complex and the NEMO-IKKA-IKKB complex. In turn, MAP3K7/TAK1 activates IKKs (CHUK/IKKA and IKBKB/IKKB) leading to NF-kappa-B nuclear translocation and activation. Alternatively, phosphorylates TIRAP to promote its ubiquitination and subsequent degradation. Phosphorylates the interferon regulatory factor 7 (IRF7) to induce its activation and translocation to the nucleus, resulting in transcriptional activation of type I IFN genes, which drive the cell in an antiviral state. When sumoylated, translocates to the nucleus and phosphorylates STAT3. The chain is Interleukin-1 receptor-associated kinase 1 (Irak1) from Mus musculus (Mouse).